The primary structure comprises 433 residues: Glutamate-1-semialdehyde 2,1-aminomutase (433 aa).

K273 bears the N6-(pyridoxal phosphate)lysine mark.

Belongs to the class-III pyridoxal-phosphate-dependent aminotransferase family. HemL subfamily. Homodimer. It depends on pyridoxal 5'-phosphate as a cofactor.

The protein resides in the cytoplasm. It carries out the reaction (S)-4-amino-5-oxopentanoate = 5-aminolevulinate. It participates in porphyrin-containing compound metabolism; protoporphyrin-IX biosynthesis; 5-aminolevulinate from L-glutamyl-tRNA(Glu): step 2/2. Its pathway is porphyrin-containing compound metabolism; chlorophyll biosynthesis. The protein is Glutamate-1-semialdehyde 2,1-aminomutase of Rippkaea orientalis (strain PCC 8801 / RF-1) (Cyanothece sp. (strain PCC 8801)).